A 292-amino-acid polypeptide reads, in one-letter code: Homoserine kinase (292 aa).

84–94 lines the ATP pocket; sequence PISRGLGSSSA.

Belongs to the GHMP kinase family. Homoserine kinase subfamily.

The protein localises to the cytoplasm. It catalyses the reaction L-homoserine + ATP = O-phospho-L-homoserine + ADP + H(+). It functions in the pathway amino-acid biosynthesis; L-threonine biosynthesis; L-threonine from L-aspartate: step 4/5. Catalyzes the ATP-dependent phosphorylation of L-homoserine to L-homoserine phosphate. The protein is Homoserine kinase of Sulfurovum sp. (strain NBC37-1).